Consider the following 633-residue polypeptide: Glutathione S-transferase C-terminal domain-containing protein (633 aa).

In terms of domain architecture, GST C-terminal spans 130–332 (LGFKKTCLKA…QEVPGVKTAA (203 aa)). The tract at residues 191 to 233 (NDDKLRRQKLKQQKADGVGPPLTKGKAKSKVHTQETSEGLDSS) is disordered. A compositionally biased stretch (polar residues) spans 224 to 233 (QETSEGLDSS). Ser-233 carries the post-translational modification Phosphoserine.

It belongs to the GSTCD family. Widely expressed in cell types relevant to airway function, including airway smooth muscle cells and epithelial cells.

It is found in the cytoplasm. This Homo sapiens (Human) protein is Glutathione S-transferase C-terminal domain-containing protein (GSTCD).